A 329-amino-acid polypeptide reads, in one-letter code: DNA-directed RNA polymerase subunit alpha (329 aa).

Residues 1 to 235 form an alpha N-terminal domain (alpha-NTD) region; the sequence is MQGSVIEFLK…EQLDAFVDLR (235 aa). The interval 249–329 is alpha C-terminal domain (alpha-CTD); it reads FDPILLRPVD…NWPPASIAED (81 aa).

The protein belongs to the RNA polymerase alpha chain family. Homodimer. The RNAP catalytic core consists of 2 alpha, 1 beta, 1 beta' and 1 omega subunit. When a sigma factor is associated with the core the holoenzyme is formed, which can initiate transcription.

It catalyses the reaction RNA(n) + a ribonucleoside 5'-triphosphate = RNA(n+1) + diphosphate. Functionally, DNA-dependent RNA polymerase catalyzes the transcription of DNA into RNA using the four ribonucleoside triphosphates as substrates. The protein is DNA-directed RNA polymerase subunit alpha of Haemophilus ducreyi (strain 35000HP / ATCC 700724).